The chain runs to 339 residues: Paired box protein Pax-9 (339 aa).

Residues 2-128 constitute a DNA-binding region (paired); the sequence is AFGEVNQLGG…SSISRILRNK (127 aa). The PAI subdomain stretch occupies residues 5–61; it reads EVNQLGGVFVNGRPLPNAIRLRIVELAQLGIRPCDISRQLRVSHGCVSKILARYNET. Positions 80–128 are RED subdomain; it reads TVVKHIRTYKQRDPGIFAWEIRDRLLADGVCDKYNVPSVSSISRILRNK.

The protein resides in the nucleus. In Gallus gallus (Chicken), this protein is Paired box protein Pax-9 (PAX9).